The chain runs to 281 residues: Protein ZAR1-like 1.S (281 aa).

The segment at 183–267 (QKYGFFQCKD…QDLCGRCKGQ (85 aa)) adopts a 3CxxC-type zinc-finger fold.

Belongs to the ZAR1 family. As to quaternary structure, component of a cytoplasmic ribonucleoprotein complex together with eif4enif1/4E-T and cpeb1. As to expression, expressed in oocytes.

The protein resides in the cytoplasm. The protein localises to the cytoplasmic ribonucleoprotein granule. Its function is as follows. mRNA-binding protein required for maternal mRNA storage, translation and degradation during oocyte maturation. Controls timing of meiosis during oogenesis. Probably promotes formation of some phase-separated membraneless compartment that stores maternal mRNAs in oocytes: acts by undergoing liquid-liquid phase separation upon binding to maternal mRNAs. Binds to the 3'-UTR of maternal mRNAs, inhibiting their translation. The sequence is that of Protein ZAR1-like 1.S from Xenopus laevis (African clawed frog).